We begin with the raw amino-acid sequence, 307 residues long: Nitrogenase iron protein 2 (307 aa).

13 to 20 (GKGGIGKS) contributes to the ATP binding site. Cysteine 101 contacts [4Fe-4S] cluster. At arginine 104 the chain carries ADP-ribosylarginine; by dinitrogenase reductase ADP-ribosyltransferase. Residue cysteine 135 participates in [4Fe-4S] cluster binding. The segment at 285–307 (QLTETDKAAKESEKKQEDAEGEA) is disordered.

The protein belongs to the NifH/BchL/ChlL family. As to quaternary structure, homodimer. Requires [4Fe-4S] cluster as cofactor. In terms of processing, the reversible ADP-ribosylation of Arg-104 inactivates the nitrogenase reductase and regulates nitrogenase activity.

The catalysed reaction is N2 + 8 reduced [2Fe-2S]-[ferredoxin] + 16 ATP + 16 H2O = H2 + 8 oxidized [2Fe-2S]-[ferredoxin] + 2 NH4(+) + 16 ADP + 16 phosphate + 6 H(+). Its function is as follows. The key enzymatic reactions in nitrogen fixation are catalyzed by the nitrogenase complex, which has 2 components: the iron protein and the molybdenum-iron protein. This Mastigocladus laminosus (Fischerella sp.) protein is Nitrogenase iron protein 2 (nifH2).